The sequence spans 436 residues: MQVSVETTQGLERRLTITVPAATVDAAVRKELNGLAKTRRIDGFRPGKAPVAIIKKMFGAMAHARVADEMMQSNFIKAIIENKLSPAGAPTMDPKEIQEGQDFEFTATFEVYPEFEVAGLETIKVEKPVATVKDEDLGNMIDTLRKQHATWSEVDAAAADGMRVTMDFVGSIDGEEFDGGKAEGFNLVLGAGRMIPGFEDAIMGKKAGDEFTIDVTFPADYHAENLKGKAAKFASKLNKVEEQILPELTEEFVKRFGIESGNVEELKAEVRKNMERELAQALKNSVKEQVLNGLVEANQIDLPKAAVAQEIDALRQQALQRFGGFQGGNAPELPAELFQGQAERRVRVGLLLGDVIRTNEIKADEARVNSIIESMATAYEDPKEVIEYYQKNEQMLNGVRNLAVEDQAIDLILSKAQVTEKEVAFDEVINKSGAAA.

One can recognise a PPIase FKBP-type domain in the interval 161–246 (GMRVTMDFVG…LNKVEEQILP (86 aa)).

The protein belongs to the FKBP-type PPIase family. Tig subfamily.

The protein resides in the cytoplasm. It carries out the reaction [protein]-peptidylproline (omega=180) = [protein]-peptidylproline (omega=0). Involved in protein export. Acts as a chaperone by maintaining the newly synthesized protein in an open conformation. Functions as a peptidyl-prolyl cis-trans isomerase. The protein is Trigger factor of Aeromonas hydrophila subsp. hydrophila (strain ATCC 7966 / DSM 30187 / BCRC 13018 / CCUG 14551 / JCM 1027 / KCTC 2358 / NCIMB 9240 / NCTC 8049).